The sequence spans 230 residues: Large ribosomal subunit protein uL1 (230 aa).

This sequence belongs to the universal ribosomal protein uL1 family. Part of the 50S ribosomal subunit.

Functionally, binds directly to 23S rRNA. The L1 stalk is quite mobile in the ribosome, and is involved in E site tRNA release. Protein L1 is also a translational repressor protein, it controls the translation of the L11 operon by binding to its mRNA. The polypeptide is Large ribosomal subunit protein uL1 (Bacillus cereus (strain B4264)).